A 739-amino-acid chain; its full sequence is MAKEINLTGEEVVALAAKYMNETDAAFVKKALDYATAAHFYQVRKSGEPYIVHPIQVAGILADLHLDAVTVACGFLHDVVEDTDITLDNIEFDFGKDVRDIVDGVTKLGKVEYKSHEEQLAENHRKMLMAMSKDIRVILVKLADRLHNMRTLKHLRKDKQERISRETMEIYAPLAHRLGISRIKWELEDLAFRYLNETEFYKISHMMNEKRREREALVDDIVTKIKSYTTEQGLFGDVYGRPKHIYSIYRKMRDKKKRFDQIFDLIAIRCVMETQSDVYAMVGYIHELWRPMPGRFKDYIAAPKANGYQSIHTTVYGPKGPIEIQIRTKEMHQVAEYGVAAHWAYKKGVRGKVNQAEQKVGMNWIKELVELQDASNGDAVDFVDSVKEDIFSERIYVFTPTGAVQELPKDSGPIDFAYAIHTQVGEKAIGAKVNGRMVPLTAKLKTGDVVEIVTNPNSFGPSRDWIKLVKTNKARNKIRQFFKNQDKELSVNKGRDMLVSYFQEQGYVANKYLDKKRIEAILPKVSVKSEESLYAAVGFGDISPVSVFNKLTEKERREEERAKAKAEAEELVNGGEIKHENKDVLKVRSENGVIIQGASGLLMRIAKCCNPVPGDPIEGYITKGRGIAIHRADCNNIKSQDGYQERLIEVEWDLDNSSKDYQAEIDIYGLNRRGLLNDVLQILSNSTKSISTVNAQPTKDMKFANIHVSFGIPNLTHLTTVVEKIKAVPDVYSVKRTNG.

One can recognise an HD domain in the interval 50–149; that stretch reads YIVHPIQVAG…VKLADRLHNM (100 aa). Mn(2+)-binding residues include H53 and H77. Active-site nucleophile, for hydrolase activity residues include E81 and D82. Position 144 (D144) interacts with Mn(2+). Mg(2+) is bound at residue D264. The 62-residue stretch at 393 to 454 folds into the TGS domain; it reads ERIYVFTPTG…KTGDVVEIVT (62 aa). One can recognise an ACT domain in the interval 664–739; that stretch reads EIDIYGLNRR…DVYSVKRTNG (76 aa).

This sequence belongs to the RelA/SpoT family. Requires Mg(2+) as cofactor. Mn(2+) is required as a cofactor.

It carries out the reaction GTP + ATP = guanosine 3'-diphosphate 5'-triphosphate + AMP. The catalysed reaction is guanosine 3',5'-bis(diphosphate) + H2O = GDP + diphosphate + H(+). The protein operates within purine metabolism; ppGpp biosynthesis; ppGpp from GDP: step 1/1. Its pathway is purine metabolism; ppGpp biosynthesis; ppGpp from GTP: step 1/2. Alpha-beta methylenyl ATP, an ATP-analog inhibitor of the synthase activity also reduces the hydrolase activity about 4-fold. Functionally, in eubacteria ppGpp (guanosine 3'-diphosphate 5'-diphosphate) is a mediator of the stringent response that coordinates a variety of cellular activities in response to changes in nutritional abundance. This enzyme catalyzes both the formation of pppGpp which is then hydrolyzed to form ppGpp, and the hydrolysis of ppGpp. The enzyme does not simultaneously display both synthase and hydrolase activities. In the structure of residues 1-385 there are 2 conformations seen, the hydrolase-OFF/synthase-ON and hydrolase-ON/synthase-OFF, suggesting there is ligand-induced signal transmission between the 2 active sites. In Streptococcus dysgalactiae subsp. equisimilis (Streptococcus equisimilis), this protein is Bifunctional (p)ppGpp synthase/hydrolase RelA (relA).